The chain runs to 354 residues: S-adenosylmethionine:tRNA ribosyltransferase-isomerase (354 aa).

It belongs to the QueA family. Monomer.

Its subcellular location is the cytoplasm. It carries out the reaction 7-aminomethyl-7-carbaguanosine(34) in tRNA + S-adenosyl-L-methionine = epoxyqueuosine(34) in tRNA + adenine + L-methionine + 2 H(+). It participates in tRNA modification; tRNA-queuosine biosynthesis. Transfers and isomerizes the ribose moiety from AdoMet to the 7-aminomethyl group of 7-deazaguanine (preQ1-tRNA) to give epoxyqueuosine (oQ-tRNA). This Salmonella newport (strain SL254) protein is S-adenosylmethionine:tRNA ribosyltransferase-isomerase.